Reading from the N-terminus, the 62-residue chain is Large ribosomal subunit protein eL24 (62 aa).

Residues Cys-6, Cys-9, Cys-32, and Cys-36 each contribute to the Zn(2+) site. The C4-type zinc-finger motif lies at 6–36 (CSFCGELLEPGTGLLFAKRDGSTYYFCSSKC).

This sequence belongs to the eukaryotic ribosomal protein eL24 family. In terms of assembly, part of the 50S ribosomal subunit. Forms a cluster with proteins L3 and L14. Requires Zn(2+) as cofactor.

Its function is as follows. Binds to the 23S rRNA. This chain is Large ribosomal subunit protein eL24, found in Methanococcoides burtonii (strain DSM 6242 / NBRC 107633 / OCM 468 / ACE-M).